Consider the following 151-residue polypeptide: Monooxygenase nsrQ (151 aa).

This sequence belongs to the avfA family.

It participates in secondary metabolite biosynthesis. Functionally, monooxygenase; part of the gene cluster that mediates the biosynthesis of the tetrahydroxanthone dimer neosartorin, which exhibits antibacterial activity. The two different monomeric units appear to be synthesized by the same set of enzymes, among which the Baeyer-Villiger monooxygenase nsrF is the key enzyme for the divergence of the biosynthetic routes. The pathway begins with the synthesis of atrochrysone thioester by the polyketide synthase nsrB. The atrochrysone carboxyl ACP thioesterase nsrC then breaks the thioester bond and releases the atrochrysone carboxylic acid from AacuL. Atrochrysone carboxylic acid is decarboxylated by the decarboxylase nsrE, and oxidized by the anthrone oxygenase nsrD to yield emodin. Emodin is then reduced to emodin hydroquinone by the oxidoreductase nsrR. A-ring reduction by the short chain dehydrogenase nsrJ, dehydration by the scytalone dehydratase-like protein nsrI and probable spontaneous re-oxidation, results in overall deoxygenation to chrysophanol. The Baeyer-Villiger monooxygenase nsrF accepts chrysophanol as a substrate to insert one oxygen atom at two different positions to yield the precursors of both monomric units. NsrF is promiscuous/flexible in interacting with the 2 (non methylated and methylated) aromatic rings of chrysophanol, thus diverging the biosynthetic pathway at this point. After the hydrolysis of the lactones, methylesterification by the methyltransferase nsrG yields respectively moniliphenone and 2,2',6'-trihydroxy-4-methyl-6-methoxya-cyldiphenylmethanone. The next steps are the hydroxylation by the FAD-dependent monooxygenase nsrK, followed by isomerization by the monooxygenase nsrQ. The short chain dehydrogenase/reductase nsrO then catalyzes the C-5 ketoreduction to give the xanthone skeleton of blennolide C and 5-acetylblennolide A. The acetyltransferase nsrL has a strict substrate specificity and uses only blennolide A but not blennolide C to yield 5-acetylblennolide A as the single-acetylated product. In the final step of the biosynthesis, the heterodimerization of the 2 xanthones, blennolide C and 5-acetylblennolide A, is catalyzed by the cytochrome P450 monooxygenase nsrP. NsrP can utilize at least three different xanthones as its substrates to perform the dimerization reaction. The chain is Monooxygenase nsrQ from Aspergillus novofumigatus (strain IBT 16806).